The primary structure comprises 355 residues: Putative GPI-anchor transamidase (355 aa).

The first 24 residues, 1-24 (MFNIMLVKFVVIFALILASCRVEA), serve as a signal peptide directing secretion. Residues H165 and C207 contribute to the active site.

This sequence belongs to the peptidase C13 family.

It functions in the pathway glycolipid biosynthesis; glycosylphosphatidylinositol-anchor biosynthesis. Its function is as follows. Mediates GPI anchoring in the endoplasmic reticulum, by replacing a protein's C-terminal GPI attachment signal peptide with a pre-assembled GPI. During this transamidation reaction, the GPI transamidase forms a carbonyl intermediate with the substrate protein. This chain is Putative GPI-anchor transamidase, found in Drosophila melanogaster (Fruit fly).